We begin with the raw amino-acid sequence, 391 residues long: Methionine import ATP-binding protein MetN 2 (391 aa).

The ABC transporter domain maps to Val44 to Leu280. Gly77–Ser84 serves as a coordination point for ATP.

It belongs to the ABC transporter superfamily. Methionine importer (TC 3.A.1.24) family. In terms of assembly, the complex is composed of two ATP-binding proteins (MetN), two transmembrane proteins (MetI) and a solute-binding protein (MetQ).

The protein resides in the cell inner membrane. The catalysed reaction is L-methionine(out) + ATP + H2O = L-methionine(in) + ADP + phosphate + H(+). It catalyses the reaction D-methionine(out) + ATP + H2O = D-methionine(in) + ADP + phosphate + H(+). In terms of biological role, part of the ABC transporter complex MetNIQ involved in methionine import. Responsible for energy coupling to the transport system. The protein is Methionine import ATP-binding protein MetN 2 of Burkholderia ambifaria (strain ATCC BAA-244 / DSM 16087 / CCUG 44356 / LMG 19182 / AMMD) (Burkholderia cepacia (strain AMMD)).